Consider the following 553-residue polypeptide: Tether containing UBX domain for GLUT4 (553 aa).

Ala-2 is modified (N-acetylalanine). Residues 182–202 (PGSLGSSASAGQAAASAPLPL) are compositionally biased toward low complexity. The segment at 182-324 (PGSLGSSASA…REPVDREPVV (143 aa)) is disordered. At Ser-184 the chain carries Phosphoserine. Positions 206–217 (ELSRGDLSRPED) are enriched in basic and acidic residues. The span at 260 to 280 (RPLTSSSAKLPKSLSSPGGPS) shows a compositional bias: low complexity. At Ser-275 the chain carries Phosphoserine. Residues 296–324 (EQERERDPQQEQERERPVDREPVDREPVV) show a composition bias toward basic and acidic residues. The interaction with GLUT4 stretch occupies residues 317-380 (PVDREPVVCH…LVTKAFREAQ (64 aa)). A UBX domain is found at 386–462 (ERYPKVALRV…NLFPAALVHL (77 aa)). The disordered stretch occupies residues 499 to 536 (GSPSPLPAPDPAPKSEPAAEEGALVPPEPIPGTAQPVK). 2 positions are modified to phosphoserine: Ser-500 and Ser-502. The span at 502-512 (SPLPAPDPAPK) shows a compositional bias: pro residues.

As to quaternary structure, interacts with GLUT4. Interacts with VCPKMT. Interacts with VCP. As to expression, ubiquitous. Highly expressed in testis, heart, skeletal muscle and pancreas.

The protein localises to the endomembrane system. Its subcellular location is the endoplasmic reticulum-Golgi intermediate compartment membrane. The protein resides in the cytoplasm. It is found in the nucleus. Tethering protein that sequesters GLUT4-containing vesicles in the cytoplasm in the absence of insulin. Modulates the amount of GLUT4 that is available at the cell surface. Enhances VCP methylation catalyzed by VCPKMT. This Homo sapiens (Human) protein is Tether containing UBX domain for GLUT4 (ASPSCR1).